The following is a 180-amino-acid chain: Urease accessory protein UreE (180 aa).

The segment at 71–90 (AAPSGAGHGDGEQDGTGAPG) is disordered.

It belongs to the UreE family.

The protein resides in the cytoplasm. Its function is as follows. Involved in urease metallocenter assembly. Binds nickel. Probably functions as a nickel donor during metallocenter assembly. The sequence is that of Urease accessory protein UreE from Kocuria rhizophila (strain ATCC 9341 / DSM 348 / NBRC 103217 / DC2201).